Consider the following 954-residue polypeptide: Zinc finger protein 618 (954 aa).

At M1 the chain carries N-acetylmethionine. Residues 1-19 (MNQPGGAAAPQADGASAAG) are compositionally biased toward low complexity. A disordered region spans residues 1–56 (MNQPGGAAAPQADGASAAGRKSTASRERLKRSQKSTKVEGPEPVPAEASLSAEQGT). Residues K63 and K81 each participate in a glycyl lysine isopeptide (Lys-Gly) (interchain with G-Cter in SUMO2) cross-link. 2 consecutive C2H2-type zinc fingers follow at residues 147 to 169 (YECGICGKKYKYYNCFQTHVRAH) and 188 to 210 (YTCDICGKKYKYYSCFQEHRDLH). K239 is covalently cross-linked (Glycyl lysine isopeptide (Lys-Gly) (interchain with G-Cter in SUMO2)). A C2H2-type 3 zinc finger spans residues 256 to 278 (YTCEFCGKQYKYYTPYQEHVALH). 2 disordered regions span residues 282–307 (STAPGWEPPDDPDTGSECSHPEVSPS) and 337–390 (RTPP…NSSE). Residues 340 to 357 (PATQTQTFRTPNSGSPAS) are compositionally biased toward polar residues. Positions 366–380 (FSRRVEGKAQNHFEE) are enriched in basic and acidic residues. Residues 392–414 (YTCGACGIQFQFYNNLLEHMQSH) form a C2H2-type 4 zinc finger. Positions 421–463 (NIASNQSRSPPAVVEEKWKPQAQRNSANNTTTSGLTPNSMIPE) are disordered. K437 is covalently cross-linked (Glycyl lysine isopeptide (Lys-Gly) (interchain with G-Cter in SUMO2)). The span at 442–459 (AQRNSANNTTTSGLTPNS) shows a compositional bias: polar residues.

Belongs to the krueppel C2H2-type zinc-finger protein family. As to quaternary structure, interacts with UHRF2.

The protein resides in the nucleus. It localises to the chromosome. Regulates UHRF2 function as a specific 5-hydroxymethylcytosine (5hmC) reader by regulating its chromatin localization. This is Zinc finger protein 618 (ZNF618) from Homo sapiens (Human).